Reading from the N-terminus, the 146-residue chain is Spermidine export protein MdtJ (146 aa).

4 helical membrane passes run 1–21 (MIYWIFLVLAIICEVIGTLSM), 31–51 (TGMIVMWLMIATSYIFLAIAV), 54–74 (VALGVAYALWEGIGIVIITTF), and 76–96 (VLWFGESLSALKLGGLAMLIA).

It belongs to the drug/metabolite transporter (DMT) superfamily. Small multidrug resistance (SMR) (TC 2.A.7.1) family. MdtJ subfamily. Forms a complex with MdtI.

The protein resides in the cell inner membrane. Its function is as follows. Catalyzes the excretion of spermidine. This chain is Spermidine export protein MdtJ, found in Proteus mirabilis (strain HI4320).